The sequence spans 567 residues: Dihydroxy-acid dehydratase 3 (567 aa).

Cys57 contributes to the [2Fe-2S] cluster binding site. Asp89 contacts Mg(2+). Cys130 is a binding site for [2Fe-2S] cluster. Asp131 and Lys132 together coordinate Mg(2+). Residue Lys132 is modified to N6-carboxylysine. Cys202 is a binding site for [2Fe-2S] cluster. Glu454 is a Mg(2+) binding site. Ser480 acts as the Proton acceptor in catalysis.

It belongs to the IlvD/Edd family. Homodimer. The cofactor is [2Fe-2S] cluster. Requires Mg(2+) as cofactor.

The catalysed reaction is (2R)-2,3-dihydroxy-3-methylbutanoate = 3-methyl-2-oxobutanoate + H2O. It carries out the reaction (2R,3R)-2,3-dihydroxy-3-methylpentanoate = (S)-3-methyl-2-oxopentanoate + H2O. It participates in amino-acid biosynthesis; L-isoleucine biosynthesis; L-isoleucine from 2-oxobutanoate: step 3/4. It functions in the pathway amino-acid biosynthesis; L-valine biosynthesis; L-valine from pyruvate: step 3/4. Functionally, functions in the biosynthesis of branched-chain amino acids. Catalyzes the dehydration of (2R,3R)-2,3-dihydroxy-3-methylpentanoate (2,3-dihydroxy-3-methylvalerate) into 2-oxo-3-methylpentanoate (2-oxo-3-methylvalerate) and of (2R)-2,3-dihydroxy-3-methylbutanoate (2,3-dihydroxyisovalerate) into 2-oxo-3-methylbutanoate (2-oxoisovalerate), the penultimate precursor to L-isoleucine and L-valine, respectively. This Aromatoleum aromaticum (strain DSM 19018 / LMG 30748 / EbN1) (Azoarcus sp. (strain EbN1)) protein is Dihydroxy-acid dehydratase 3.